Here is a 78-residue protein sequence, read N- to C-terminus: Esculentin-2Vb (78 aa).

The N-terminal stretch at 1–22 (MFTMKKSLLLLFFLGTISLSLC) is a signal peptide. Positions 23 to 39 (EEERGADEEEGDGEKLM) are excised as a propeptide. Cys72 and Cys78 are joined by a disulfide.

In terms of tissue distribution, expressed by the skin glands.

Its subcellular location is the secreted. Antimicrobial peptide. The polypeptide is Esculentin-2Vb (Odorrana versabilis (Chinese bamboo leaf odorous frog)).